The sequence spans 296 residues: MSWINRIFSKSPSSSTRKANVPEGVWTKCTSCEQVLYSEELKRNLYVCPKCGHHMRIDARERLLKLLDEGSSQEIAADLEPKDILKFKDLKKYKDRINAAQKETGEKDALITMTGTLYDMPIVVAASNFAFMGGSMGSVVGAKFVKAAEKAMEMNCPFVCFSASGGARMQEALFSLMQMAKTSAVLAQMREKGVPFISVLADPTLGGVSASFAMLGDLNIAEPKALIGFAGPRVIEQTVREKLPEGFQRSEFLLEKGAIDMIVKRSEMRQTLASVLSKLTNQPSPFVEPELISEDE.

In terms of domain architecture, CoA carboxyltransferase N-terminal spans 25-294 (VWTKCTSCEQ…PFVEPELISE (270 aa)). C29, C32, C48, and C51 together coordinate Zn(2+). A C4-type zinc finger spans residues 29–51 (CTSCEQVLYSEELKRNLYVCPKC).

This sequence belongs to the AccD/PCCB family. In terms of assembly, acetyl-CoA carboxylase is a heterohexamer composed of biotin carboxyl carrier protein (AccB), biotin carboxylase (AccC) and two subunits each of ACCase subunit alpha (AccA) and ACCase subunit beta (AccD). It depends on Zn(2+) as a cofactor.

The protein resides in the cytoplasm. It carries out the reaction N(6)-carboxybiotinyl-L-lysyl-[protein] + acetyl-CoA = N(6)-biotinyl-L-lysyl-[protein] + malonyl-CoA. It participates in lipid metabolism; malonyl-CoA biosynthesis; malonyl-CoA from acetyl-CoA: step 1/1. In terms of biological role, component of the acetyl coenzyme A carboxylase (ACC) complex. Biotin carboxylase (BC) catalyzes the carboxylation of biotin on its carrier protein (BCCP) and then the CO(2) group is transferred by the transcarboxylase to acetyl-CoA to form malonyl-CoA. The chain is Acetyl-coenzyme A carboxylase carboxyl transferase subunit beta from Haemophilus influenzae (strain PittEE).